The sequence spans 249 residues: Putative protein SNX29P2 (249 aa).

Disordered stretches follow at residues 109–171 (QVTN…SNSW) and 188–249 (DVKS…PGFK). The span at 156-170 (SPFGPNSNGSQSSNS) shows a compositional bias: low complexity. Residues 193–204 (DDEDVDENEDDV) are compositionally biased toward acidic residues. Polar residues predominate over residues 226-242 (HSVTQAGVQWHDLSSLQ).

Belongs to the sorting nexin family.

This Homo sapiens (Human) protein is Putative protein SNX29P2 (SNX29P2).